The chain runs to 286 residues: MSEQVRHVLTLQCPEGIGIVHAVTGFLVRHQRTIVELKQYDDMSAGRLFLRVDFAGDSAPDLLDALRSEFSEVAAKFDMDWQLRERGQKTKVLIMVSKFEHCLQDLLFRMHSGDLPIEVVGVASNHPDHRSLVEWYGIGFHHIPISKDTKPRAEAALLELIDQTGAELVVLARYMQVLSDHLASELTGKTINIHHSFLPSFKGAKPYHQAWERGVKTVGATAHYVNSELDEGPIIAQQVVEVDHTYGPQDLVAAGRDSECKALSNAVRWHCEGRVFLYGNRTVVLR.

Residues 8-88 form the ACT domain; sequence VLTLQCPEGI…MDWQLRERGQ (81 aa). The active site involves Asp-230.

This sequence belongs to the PurU family.

It catalyses the reaction (6R)-10-formyltetrahydrofolate + H2O = (6S)-5,6,7,8-tetrahydrofolate + formate + H(+). It participates in purine metabolism; IMP biosynthesis via de novo pathway; formate from 10-formyl-5,6,7,8-tetrahydrofolate: step 1/1. In terms of biological role, catalyzes the hydrolysis of 10-formyltetrahydrofolate (formyl-FH4) to formate and tetrahydrofolate (FH4). This is Formyltetrahydrofolate deformylase from Corynebacterium sp. (strain P-1).